A 364-amino-acid chain; its full sequence is Mannose-1-phosphate guanyltransferase (364 aa).

Belongs to the transferase hexapeptide repeat family.

It localises to the cytoplasm. The enzyme catalyses alpha-D-mannose 1-phosphate + GTP + H(+) = GDP-alpha-D-mannose + diphosphate. It functions in the pathway nucleotide-sugar biosynthesis; GDP-alpha-D-mannose biosynthesis; GDP-alpha-D-mannose from alpha-D-mannose 1-phosphate (GTP route): step 1/1. Involved in cell wall synthesis where it is required for glycosylation. Involved in cell cycle progression through cell-size checkpoint. This is Mannose-1-phosphate guanyltransferase (MPG1) from Gibberella zeae (strain ATCC MYA-4620 / CBS 123657 / FGSC 9075 / NRRL 31084 / PH-1) (Wheat head blight fungus).